The following is a 122-amino-acid chain: MKKGLIMANHRIDRVGMEIKREVNEILRLRVNDPRVQDVTITDVQMLGDLSMAKVFYTIHSTLASDNQKAQIGLEKATGTIKRELGKNLTMYKIPDLQFVKDESIEYGNKIDEMLRNLDKKD.

The protein belongs to the RbfA family. In terms of assembly, monomer. Binds 30S ribosomal subunits, but not 50S ribosomal subunits or 70S ribosomes.

It localises to the cytoplasm. Functionally, one of several proteins that assist in the late maturation steps of the functional core of the 30S ribosomal subunit. Associates with free 30S ribosomal subunits (but not with 30S subunits that are part of 70S ribosomes or polysomes). Required for efficient processing of 16S rRNA. May interact with the 5'-terminal helix region of 16S rRNA. The protein is Ribosome-binding factor A of Streptococcus agalactiae serotype III (strain NEM316).